Consider the following 128-residue polypeptide: CD59 glycoprotein (128 aa).

The signal sequence occupies residues 1–25; that stretch reads MGIQGGSVLFGLLLVLAVFCHSGHS. The 83-residue stretch at 26 to 108 folds into the UPAR/Ly6 domain; that stretch reads LQCYNCPNPT…QLENGGTSLS (83 aa). 3 disulfides stabilise this stretch: Cys28-Cys51, Cys31-Cys38, and Cys44-Cys64. N-linked (GlcNAc...) asparagine glycosylation is present at Asn43. An N-linked (Glc) (glycation) lysine glycan is attached at Lys66. Cystine bridges form between Cys70-Cys88 and Cys89-Cys94. O-linked (GalNAc...) threonine glycans are attached at residues Thr76 and Thr77. Residue Asn102 is the site of GPI-anchor amidated asparagine attachment. Positions 103-128 are cleaved as a propeptide — removed in mature form; the sequence is GGTSLSEKTVLLLVTPFLAAAWSLHP.

In terms of assembly, interacts with T-cell surface antigen CD2. N- and O-glycosylated. The N-glycosylation mainly consists of a family of biantennary complex-type structures with and without lactosamine extensions and outer arm fucose residues. Also significant amounts of triantennary complexes (22%). Variable sialylation also present in the Asn-43 oligosaccharide. The predominant O-glycans are mono-sialylated forms of the disaccharide, Gal-beta-1,3GalNAc, and their sites of attachment are probably on Thr-76 and Thr-77. The GPI-anchor of soluble urinary CD59 has no inositol-associated phospholipid, but is composed of seven different GPI-anchor variants of one or more monosaccharide units. Major variants contain sialic acid, mannose and glucosamine. Sialic acid linked to an N-acetylhexosamine-galactose arm is present in two variants. Post-translationally, glycated. Glycation is found in diabetic subjects, but only at minimal levels in nondiabetic subjects. Glycated CD59 lacks MAC-inhibitory function and confers to vascular complications of diabetes.

It is found in the cell membrane. The protein localises to the secreted. Functionally, potent inhibitor of the complement membrane attack complex (MAC) action, which protects human cells from damage during complement activation. Acts by binding to the beta-haipins of C8 (C8A and C8B) components of the assembling MAC, forming an intermolecular beta-sheet that prevents incorporation of the multiple copies of C9 required for complete formation of the osmolytic pore. The soluble form from urine retains its specific complement binding activity, but exhibits greatly reduced ability to inhibit complement membrane attack complex (MAC) assembly on cell membranes. In Homo sapiens (Human), this protein is CD59 glycoprotein.